A 232-amino-acid polypeptide reads, in one-letter code: Biosynthetic peptidoglycan transglycosylase (232 aa).

The chain crosses the membrane as a helical span at residues 14–34 (AAVALVLLYQLWIFAHVLWWI).

It belongs to the glycosyltransferase 51 family.

It localises to the cell inner membrane. The enzyme catalyses [GlcNAc-(1-&gt;4)-Mur2Ac(oyl-L-Ala-gamma-D-Glu-L-Lys-D-Ala-D-Ala)](n)-di-trans,octa-cis-undecaprenyl diphosphate + beta-D-GlcNAc-(1-&gt;4)-Mur2Ac(oyl-L-Ala-gamma-D-Glu-L-Lys-D-Ala-D-Ala)-di-trans,octa-cis-undecaprenyl diphosphate = [GlcNAc-(1-&gt;4)-Mur2Ac(oyl-L-Ala-gamma-D-Glu-L-Lys-D-Ala-D-Ala)](n+1)-di-trans,octa-cis-undecaprenyl diphosphate + di-trans,octa-cis-undecaprenyl diphosphate + H(+). The protein operates within cell wall biogenesis; peptidoglycan biosynthesis. In terms of biological role, peptidoglycan polymerase that catalyzes glycan chain elongation from lipid-linked precursors. In Thiobacillus denitrificans (strain ATCC 25259 / T1), this protein is Biosynthetic peptidoglycan transglycosylase.